Here is a 219-residue protein sequence, read N- to C-terminus: Oligoribonuclease (219 aa).

The region spanning 19-184 (LVWVDLEMTG…ADIVESIREL (166 aa)) is the Exonuclease domain. The active site involves Y141.

It belongs to the oligoribonuclease family.

Its subcellular location is the cytoplasm. Functionally, 3'-to-5' exoribonuclease specific for small oligoribonucleotides. The chain is Oligoribonuclease from Corynebacterium glutamicum (strain R).